We begin with the raw amino-acid sequence, 284 residues long: Nucleotide-binding protein Sputw3181_3461 (284 aa).

Residue 8 to 15 (GRSGSGKS) coordinates ATP. 56–59 (DVRN) serves as a coordination point for GTP.

This sequence belongs to the RapZ-like family.

Displays ATPase and GTPase activities. The chain is Nucleotide-binding protein Sputw3181_3461 from Shewanella sp. (strain W3-18-1).